A 429-amino-acid chain; its full sequence is D-galactonate dehydratase family member Caci_4410 (429 aa).

The tract at residues 1-22 (MTDANHLLDPSGALPQTRPPWT) is disordered. Aspartate 233 lines the Mg(2+) pocket. Histidine 235 contacts D-arabinonate. Mg(2+) contacts are provided by glutamate 259 and glutamate 285. Positions 285, 306, 335, and 362 each coordinate D-arabinonate.

The protein belongs to the mandelate racemase/muconate lactonizing enzyme family. GalD subfamily.

In terms of biological role, has no detectable activity with D-mannonate and with a panel of 70 other acid sugars (in vitro), in spite of the conservation of the residues that are expected to be important for catalytic activity and cofactor binding. May have evolved a divergent function. The sequence is that of D-galactonate dehydratase family member Caci_4410 from Catenulispora acidiphila (strain DSM 44928 / JCM 14897 / NBRC 102108 / NRRL B-24433 / ID139908).